We begin with the raw amino-acid sequence, 605 residues long: Copper resistance protein A (605 aa).

The segment at residues 1–41 (MLLKTSRRTFLKGLTLSGVAGSLGVWSFNARSSLSLPVAAS) is a signal peptide (tat-type signal). Cu cation contacts are provided by His-100, His-102, His-142, and His-144. 3 repeat units span residues 382-389 (DHSQMGGM), 414-421 (DHSSMAGM), and 422-429 (DHSRMAGM). Residues 382–429 (DHSQMGGMDNSGEMMSMDGADLPDSGTSSAPMDHSSMAGMDHSRMAGM) form a 3 X 8 AA tandem repeats of D-H-X-X-M-X-G-M region. His-538, His-541, His-543, His-586, Cys-587, His-588, His-592, and Met-597 together coordinate Cu cation.

This sequence belongs to the multicopper oxidase family. CopA subfamily. In terms of processing, predicted to be exported by the Tat system. The position of the signal peptide cleavage has not been experimentally proven.

It is found in the periplasm. Its function is as follows. Required for the copper-inducible expression of copper resistance. May have oxidase activity. The polypeptide is Copper resistance protein A (pcoA) (Escherichia coli).